The sequence spans 972 residues: MASNNVAQFAAELKMPAGVLLEQLQAAGVQKASEDDALSETDKARLLDHLRKSHGATDGDKRKITLTRKHTSEIKQSDATGKARTIQVEVRKKRTFVKRDDVSEGAEQGQAQVAEADDDAELKRREEEARREADLLEKQAQELRERQERLEREEAERRAREEAAEAERRRAEEEAAAKRVAAEAAAAQQQAAAQQAAAAEQQEAASTQSAQDEARAAAERAAQREAAKKAEDAAREAADKARAEQEEISKRRAAAEAEARAIREMMNTPRKAVVKAVEPPKPVEPPKPAEAKGTLHKPAKPEGAQARPAVKKPAGAAAPATTAPAGAGDRNKKPGAGKGGWQDDASKRRGIKTRGDSSGGVDRGWRGGPKGRGRHQDSSTFQAPTEPIVREVHVPETVSVADLAHKMSVKASEVIKVMMKMGQMVTINQVLDQETAMIIVEELGHRAVAAKLDDPEALLVEGETGTDAEQLPRPPVVTVMGHVDHGKTSLLDHIRRAKVAAGEAGGITQHIGAYHVDTPRGVITFLDTPGHEAFTAMRARGAKATDIVVLVVAADDGVMPQTKEAIAHAKAGGVPIVVAINKIDKPDANLDRVKQELVAEGVVPEEYGGDSPFVPVSAKTGAGIDDLLENVLLQAEVLELKAPVEAPAKGIVIEAKLDKGKGPVATILVQAGTLNRGDIVLAGTAYGRVRAMLDENGKPTKEAGPSIPVEIQGLSEVPGAGEEVIVLPDERKAREIALFRQGKFRDVKLAKQQAAKLESMLEQMGEGEVQNLPLIIKADVQGSQEALVQSLLKLSTDEVRVQIVHSAVGGISENDVNLATASKAVIIGFNTRADAQARKLAESNGIDIRYYNIIYDAVDEVKAAMSGMLAPEKREVITGMVEVRQVFKVPKIGAVAGCMVTDGIVKRSSSVRVLRNNVVIFTGELESLKRFKDDVKEVKQGFECGMSVKNFNDIVEGDQFEVFEVTEVARTL.

A compositionally biased stretch (basic and acidic residues) spans 48–63; sequence DHLRKSHGATDGDKRK. 2 disordered regions span residues 48–85 and 99–385; these read DHLR…KART and RDDV…QAPT. Positions 105-114 are enriched in low complexity; the sequence is GAEQGQAQVA. The span at 121-181 shows a compositional bias: basic and acidic residues; the sequence is ELKRREEEAR…EEEAAAKRVA (61 aa). Over residues 182 to 205 the composition is skewed to low complexity; it reads AEAAAAQQQAAAQQAAAAEQQEAA. A compositionally biased stretch (basic and acidic residues) spans 212 to 263; that stretch reads DEARAAAERAAQREAAKKAEDAAREAADKARAEQEEISKRRAAAEAEARAIR. The segment covering 279-288 has biased composition (pro residues); that stretch reads PPKPVEPPKP. The segment covering 313–328 has biased composition (low complexity); sequence PAGAAAPATTAPAGAG. Over residues 357 to 370 the composition is skewed to gly residues; that stretch reads SSGGVDRGWRGGPK. The tr-type G domain occupies 472 to 641; sequence PRPPVVTVMG…LLQAEVLELK (170 aa). A G1 region spans residues 481 to 488; it reads GHVDHGKT. 481-488 provides a ligand contact to GTP; that stretch reads GHVDHGKT. A G2 region spans residues 506 to 510; the sequence is GITQH. Residues 527-530 are G3; the sequence is DTPG. GTP-binding positions include 527–531 and 581–584; these read DTPGH and NKID. The tract at residues 581 to 584 is G4; it reads NKID. Residues 617–619 are G5; it reads SAK.

The protein belongs to the TRAFAC class translation factor GTPase superfamily. Classic translation factor GTPase family. IF-2 subfamily.

It localises to the cytoplasm. One of the essential components for the initiation of protein synthesis. Protects formylmethionyl-tRNA from spontaneous hydrolysis and promotes its binding to the 30S ribosomal subunits. Also involved in the hydrolysis of GTP during the formation of the 70S ribosomal complex. In Burkholderia lata (strain ATCC 17760 / DSM 23089 / LMG 22485 / NCIMB 9086 / R18194 / 383), this protein is Translation initiation factor IF-2.